Here is a 793-residue protein sequence, read N- to C-terminus: DNA mismatch repair protein MutS (793 aa).

Position 589–596 (589–596) interacts with ATP; it reads GPNMSGKS.

The protein belongs to the DNA mismatch repair MutS family.

This protein is involved in the repair of mismatches in DNA. It is possible that it carries out the mismatch recognition step. This protein has a weak ATPase activity. This chain is DNA mismatch repair protein MutS, found in Thermotoga sp. (strain RQ2).